The following is a 137-amino-acid chain: SMR2 protein (137 aa).

A signal peptide spans 1 to 18 (MLVVLLTAALLALSSAQN). The disordered stretch occupies residues 14-113 (SSAQNTDEEV…LHHRENLRPQ (100 aa)). A compositionally biased stretch (low complexity) spans 75 to 85 (QQQQPLPVENQ). Basic and acidic residues predominate over residues 99–110 (PPPETLHHRENL).

Its subcellular location is the secreted. Functionally, unknown, male-specific function. This Rattus norvegicus (Rat) protein is SMR2 protein (Smr2).